The primary structure comprises 164 residues: MWSRFMINVKVSAAVYPTEDPEKVTKAISVLFTGIELQKEPLDAAESEKRVSPAFRLTGEGGLDLLFTLHGLIRREAIIDSIRNKVFSKGLSSEGLLVRFLLNKQAAFVGIPSVPAEEEPLGSIEVVIRTDSPEEMEKLFEWLLPLTEEGVPVVEVEMDYVERG.

Belongs to the UPF0201 family.

The sequence is that of UPF0201 protein MA_4659 from Methanosarcina acetivorans (strain ATCC 35395 / DSM 2834 / JCM 12185 / C2A).